The following is a 508-amino-acid chain: MSSQCPFSHLAATNLTMGNGAPVADNQNSLTAGPRGPLLAQDLWLNEKLADFVREVIPERRMHAKGSGAFGTFTVTHDITKYTRAKIFSEVGKKTEMFARFTTVAGERGAADAERDIRGFALKFYTEEGNWDLVGNNTPVFFLRDPRKFPDLNKAVKRDPRTNMRSATNNWDFWTLLPEALHQVTVVMSDRGIPASYRHMHGFGSHTYSFWNEAGERFWVKFHFRTQQGIKNLTDAEAAEIIANDRESHQRDLYEAIERGDFPKWTLFVQIMPEADAEKVPYHPFDLTKVWSKKDYPLIEVGEFELNRNPENFFADVEQSAFAPSNLVPGIGASPDRMLQARLFNYADAQRYRLGVNYRQIPVNRPRCPVHSNQRDGQGRVDGNYGSLPHYEPNSFSQWQQQPDFAEPPLRINGDAAHWDYRNDDNDYFSQPRALFNLMNAEQKQSLFNNTAAAMGDAPDFIKYRHIRNCHWCDAAYGEGVAKALGLTVEDALKARDTDPALGQGGLL.

Active-site residues include His63 and Asn136. Heme is bound at residue Tyr346.

The protein belongs to the catalase family. Homohexamer. It depends on heme as a cofactor.

It localises to the cytoplasm. It carries out the reaction 2 H2O2 = O2 + 2 H2O. Functionally, decomposes hydrogen peroxide into water and oxygen; serves to protect cells from the toxic effects of hydrogen peroxide. This Haemophilus influenzae (strain ATCC 51907 / DSM 11121 / KW20 / Rd) protein is Catalase (katA).